Reading from the N-terminus, the 229-residue chain is Guanylate kinase (229 aa).

The 36-residue stretch at 7 to 42 (RVLQKCAYREEFKGDMERSTAATSKLPLEVELSRNS) folds into the RPE1 insert domain. Residues 44-222 (GLIIILSSPS…TLKKIHAIIV (179 aa)) form the Guanylate kinase-like domain. 51–58 (SPSGTGKS) lines the ATP pocket.

This sequence belongs to the guanylate kinase family.

Its subcellular location is the cytoplasm. The enzyme catalyses GMP + ATP = GDP + ADP. Functionally, essential for recycling GMP and indirectly, cGMP. This Rickettsia conorii (strain ATCC VR-613 / Malish 7) protein is Guanylate kinase (gmk).